Consider the following 64-residue polypeptide: VLVASLVMLEAQSSDTIQVPDWGKRLLMNHDSNRVGIPCGESCVWIPCLTAIAGCSCKNKVCYT.

The propeptide at 1–35 (VLVASLVMLEAQSSDTIQVPDWGKRLLMNHDSNRV) is removed in mature form. 3 cysteine pairs are disulfide-bonded: C39–C55, C43–C57, and C48–C62.

In terms of tissue distribution, expressed in fruit, pedicel, root and stem but not in leaf (at protein level).

Probably participates in a plant defense mechanism. Active against E.coli ATTC25922 but not against S.aureus ATCC 12600 or S.epidermidis ATCC 14990. Has cytotoxic and hemolytic activity. The polypeptide is Chassatide C7 (Chassalia chartacea (Chassalia curviflora)).